A 726-amino-acid chain; its full sequence is DNA ligase (726 aa).

NAD(+)-binding positions include 34–38, 83–84, and glutamate 115; these read DAEYD and SL. Catalysis depends on lysine 117, which acts as the N6-AMP-lysine intermediate. Positions 138, 190, 306, and 330 each coordinate NAD(+). Zn(2+)-binding residues include cysteine 424, cysteine 427, cysteine 442, and cysteine 448. In terms of domain architecture, BRCT spans 608–698; sequence SRGNALAGKT…RTADDQATPA (91 aa). The interval 690 to 726 is disordered; sequence TADDQATPASDRRAATASVPPSDDAPGSPRQLDFDLT.

This sequence belongs to the NAD-dependent DNA ligase family. LigA subfamily. The cofactor is Mg(2+). Mn(2+) serves as cofactor.

It carries out the reaction NAD(+) + (deoxyribonucleotide)n-3'-hydroxyl + 5'-phospho-(deoxyribonucleotide)m = (deoxyribonucleotide)n+m + AMP + beta-nicotinamide D-nucleotide.. Functionally, DNA ligase that catalyzes the formation of phosphodiester linkages between 5'-phosphoryl and 3'-hydroxyl groups in double-stranded DNA using NAD as a coenzyme and as the energy source for the reaction. It is essential for DNA replication and repair of damaged DNA. This chain is DNA ligase, found in Roseiflexus sp. (strain RS-1).